Consider the following 612-residue polypeptide: Dihydroxy-acid dehydratase (612 aa).

Position 81 (aspartate 81) interacts with Mg(2+). Cysteine 122 provides a ligand contact to [2Fe-2S] cluster. Positions 123 and 124 each coordinate Mg(2+). N6-carboxylysine is present on lysine 124. Residue cysteine 195 participates in [2Fe-2S] cluster binding. Glutamate 491 is a binding site for Mg(2+). The Proton acceptor role is filled by serine 517.

Belongs to the IlvD/Edd family. As to quaternary structure, homodimer. [2Fe-2S] cluster serves as cofactor. The cofactor is Mg(2+).

It catalyses the reaction (2R)-2,3-dihydroxy-3-methylbutanoate = 3-methyl-2-oxobutanoate + H2O. The catalysed reaction is (2R,3R)-2,3-dihydroxy-3-methylpentanoate = (S)-3-methyl-2-oxopentanoate + H2O. It participates in amino-acid biosynthesis; L-isoleucine biosynthesis; L-isoleucine from 2-oxobutanoate: step 3/4. The protein operates within amino-acid biosynthesis; L-valine biosynthesis; L-valine from pyruvate: step 3/4. In terms of biological role, functions in the biosynthesis of branched-chain amino acids. Catalyzes the dehydration of (2R,3R)-2,3-dihydroxy-3-methylpentanoate (2,3-dihydroxy-3-methylvalerate) into 2-oxo-3-methylpentanoate (2-oxo-3-methylvalerate) and of (2R)-2,3-dihydroxy-3-methylbutanoate (2,3-dihydroxyisovalerate) into 2-oxo-3-methylbutanoate (2-oxoisovalerate), the penultimate precursor to L-isoleucine and L-valine, respectively. This is Dihydroxy-acid dehydratase from Rhizobium johnstonii (strain DSM 114642 / LMG 32736 / 3841) (Rhizobium leguminosarum bv. viciae).